The chain runs to 91 residues: uncharacterized protein (91 aa).

The protein localises to the plastid. It is found in the cyanelle. This is an uncharacterized protein from Cyanophora paradoxa.